Reading from the N-terminus, the 92-residue chain is C-C motif chemokine 3 (92 aa).

A signal peptide spans 1-23; sequence MKVSTTALAVLLCTMTLCNQVFS. 2 disulfide bridges follow: Cys-34-Cys-57 and Cys-35-Cys-73.

This sequence belongs to the intercrine beta (chemokine CC) family. Self-associates. Also heterodimer of MIP-1-alpha(4-69) and MIP-1-beta(3-69). Interacts with CCR1. In terms of tissue distribution, expressed in lung, spleen, and pancreas.

It is found in the secreted. Its function is as follows. Monokine with inflammatory and chemokinetic properties. Binds to CCR1, CCR4 and CCR5. One of the major HIV-suppressive factors produced by CD8+ T-cells. Recombinant MIP-1-alpha induces a dose-dependent inhibition of different strains of HIV-1, HIV-2, and simian immunodeficiency virus (SIV). The chain is C-C motif chemokine 3 (Ccl3) from Mus musculus (Mouse).